The following is a 198-amino-acid chain: MKQPIHTDPAKPDDFSTEDWRRLLTHLGENADRQGLRETPQRVEKAWKHWTSGYDQDPAEILKVFEDGAEQYNELIVVRGIPVYSHCEHHLAPFFGTATIGYTPNGKIVGLSKLTRLVDCFAKRLQVQERLTIQIADTLMEHVQPLSVGVVIRCRHMCMESRGIRTPGEETVTSALLGEMRTNLGLRNEFLMLAREKD.

Zn(2+) contacts are provided by C87, H90, and C158.

This sequence belongs to the GTP cyclohydrolase I family. As to quaternary structure, homomer.

The catalysed reaction is GTP + H2O = 7,8-dihydroneopterin 3'-triphosphate + formate + H(+). Its pathway is cofactor biosynthesis; 7,8-dihydroneopterin triphosphate biosynthesis; 7,8-dihydroneopterin triphosphate from GTP: step 1/1. This chain is GTP cyclohydrolase 1, found in Janthinobacterium sp. (strain Marseille) (Minibacterium massiliensis).